The primary structure comprises 961 residues: Ubiquitin carboxyl-terminal hydrolase 4 (961 aa).

The 112-residue stretch at 11–122 folds into the DUSP domain; the sequence is PDVETQKTEL…GQQPIVRKVV (112 aa). The interval 27 to 216 is necessary for interaction with SART3; that stretch reads TLQRGAQWYL…LYQGQVLVIE (190 aa). Residues 133-141 carry the Nuclear export signal motif; it reads VEVYLLELK. A Ubiquitin-like 1 domain is found at 142-226; sequence LCENSDPTNV…PQNEDGTWPR (85 aa). The interval 219–257 is disordered; it reads NEDGTWPRQTLQSKSSTAPSRNFTTSSKPSASPYSSMSA. A compositionally biased stretch (polar residues) spans 225–243; sequence PRQTLQSKSSTAPSRNFTT. Residues 229-295 are required for USP4 activation by providing conformational flexibility between the DUSP and catalytic domains; sequence LQSKSSTAPS…SYNCQEPPSP (67 aa). Residues 244-257 are compositionally biased toward low complexity; it reads SSKPSASPYSSMSA. The USP domain maps to 302-921; sequence CGLGNLGNTC…AAYVLFYQRR (620 aa). The active site involves C311. The interval 384 to 386 is regulates ubiquitin dissociation; sequence PQF. The segment at 405-407 is necessary for interaction with RBL2; the sequence is LHE. S445 is modified (phosphoserine). The interval 459-463 is necessary for interaction with RB1 and RBL2; sequence LVCPE. Residues C461 and C464 each coordinate Zn(2+). A Ubiquitin-like 2 domain is found at 483 to 571; the sequence is LKKDRIMEVF…IFVYEICTTP (89 aa). Residues 485 to 773 are interacts with DUSP and ubiquitin-like 1 domains and is required for USP4 activation; it reads KDRIMEVFLV…SQPQKKKKAA (289 aa). The disordered stretch occupies residues 641-700; it reads SSPLEPGACNGSRGSYEGDEEEMDHQEEGKEQLSEVEESGEDSQGGDPTETTQKAKGPPR. Phosphoserine occurs at positions 655, 674, and 679. A Nuclear localization signal motif is present at residues 765–770; that stretch reads QPQKKK. Zn(2+)-binding residues include C797 and C800. H879 is an active-site residue. Residues 924–961 form a disordered region; it reads ECPSTSSPVSFPGSDGGAKLSSSQQDLGEEEAYTMDTN. A compositionally biased stretch (acidic residues) spans 950-961; sequence LGEEEAYTMDTN.

It belongs to the peptidase C19 family. USP4 subfamily. As to quaternary structure, interacts with RB1 (both dephosphorylated and hypophosphorylated forms). Interacts with RBL1 and RBL2. Interacts with ADORA2A (via cytoplasmic C-terminus); the interaction is direct. Interacts with SART3; recruits USP4 to its substrate PRPF3. Phosphorylated at Ser-445 by PKB/AKT1 in response to EGF stimulus, promoting its ability deubiquitinate RHEB. Post-translationally, monoubiquitinated by TRIM21. Ubiquitination does not lead to its proteasomal degradation. Autodeubiquitinated. As to expression, expressed in hippocampus and striatum (at protein level).

The protein resides in the cytoplasm. Its subcellular location is the nucleus. The catalysed reaction is Thiol-dependent hydrolysis of ester, thioester, amide, peptide and isopeptide bonds formed by the C-terminal Gly of ubiquitin (a 76-residue protein attached to proteins as an intracellular targeting signal).. With respect to regulation, the completion of the deubiquitinase reaction is mediated by the DUSP and ubiquitin-like 1 domains which promotes the release of ubiquitin from the catalytic site enabling subsequent reactions to occur. In terms of biological role, deubiquitinating enzyme that removes conjugated ubiquitin from target proteins. Deubiquitinates PDPK1. Deubiquitinates TRIM21. Deubiquitinates receptor ADORA2A which increases the amount of functional receptor at the cell surface. Deubiquitinates HAS2. Deubiquitinates RHEB in response to EGF signaling, promoting mTORC1 signaling. May regulate mRNA splicing through deubiquitination of the U4 spliceosomal protein PRPF3. This may prevent its recognition by the U5 component PRPF8 thereby destabilizing interactions within the U4/U6.U5 snRNP. May also play a role in the regulation of quality control in the ER. The protein is Ubiquitin carboxyl-terminal hydrolase 4 (Usp4) of Rattus norvegicus (Rat).